Reading from the N-terminus, the 353-residue chain is Inositol-tetrakisphosphate 1-kinase 3 (353 aa).

Residues 1–25 (MKLTDNEEITMNGTREMETTEQETS) are disordered. Residues lysine 50 and lysine 92 each contribute to the 1D-myo-inositol 1,3,4-trisphosphate site. Residues arginine 127 and lysine 177 each coordinate ATP. One can recognise an ATP-grasp domain in the interval 138–350 (NLSDSNGRVG…QSQCKKRALA (213 aa)). Positions 188 and 220 each coordinate 1D-myo-inositol 1,3,4-trisphosphate. ATP-binding positions include 209–220 (QEFVNHGGVLFK) and serine 235. The Mg(2+) site is built by aspartate 300, aspartate 315, and asparagine 317. Asparagine 317 lines the 1D-myo-inositol 1,3,4-trisphosphate pocket.

It belongs to the ITPK1 family. In terms of assembly, monomer. Mg(2+) serves as cofactor. In terms of tissue distribution, highly expressed in leaves and flowers, and at lower levels in roots, stems, cauline leaves and siliques.

It carries out the reaction 1D-myo-inositol 3,4,5,6-tetrakisphosphate + ATP = 1D-myo-inositol 1,3,4,5,6-pentakisphosphate + ADP + H(+). The enzyme catalyses 1D-myo-inositol 1,3,4-trisphosphate + ATP = 1D-myo-inositol 1,3,4,5-tetrakisphosphate + ADP + H(+). It catalyses the reaction 1D-myo-inositol 1,3,4-trisphosphate + ATP = 1D-myo-inositol 1,3,4,6-tetrakisphosphate + ADP + H(+). Its function is as follows. Kinase that can phosphorylate various inositol polyphosphate such as Ins(3,4,5,6)P4 or Ins(1,3,4)P3. Phosphorylates Ins(3,4,5,6)P4 to form InsP5. This reaction is thought to have regulatory importance, since Ins(3,4,5,6)P4 is an inhibitor of plasma membrane Ca(2+)-activated Cl(-) channels, while Ins(1,3,4,5,6)P5 is not. Also phosphorylates Ins(1,3,4)P3 or a racemic mixture of Ins(1,4,6)P3 and Ins(3,4,6)P3 to form InsP4. Ins(1,3,4,6)P4 is an essential molecule in the hexakisphosphate (InsP6) pathway. This is Inositol-tetrakisphosphate 1-kinase 3 (ITPK3) from Arabidopsis thaliana (Mouse-ear cress).